The sequence spans 74 residues: Conotoxin Vi15a (74 aa).

A signal peptide spans 1 to 19; the sequence is MMPVILLLLLSLAIRCADG. The propeptide occupies 20 to 43; the sequence is KAVQGDSDPSASLLTGDKNHDLPV. At W72 the chain carries Tryptophan amide.

Contains four disulfide bonds. In terms of tissue distribution, expressed by the venom duct.

It localises to the secreted. The polypeptide is Conotoxin Vi15a (Conus virgo (Virgin cone)).